Consider the following 66-residue polypeptide: Myrmicitoxin(1)-Pr5a (66 aa).

Residues 1-25 (MRSLYLSFSLTIIFVLVIMHAEAKA) form the signal peptide. The propeptide occupies 26–37 (ISEPNAIAEADP). A Valine amide modification is found at Val65.

Belongs to the formicidae venom clade 3 family. In terms of tissue distribution, expressed by the venom gland.

It localises to the secreted. Functionally, toxin that causes a rapid and irreversible paralysis when intrathoracically injected into insects (blowflies). Does not cause spontaneous nocifensive behaviors by intraplantar injection in mice. Exhibits hemolytic and cytotoxic activities on HEK293 cells. The chain is Myrmicitoxin(1)-Pr5a from Pogonomyrmex rugosus (Desert harvester ant).